The following is an 861-amino-acid chain: Isoleucine--tRNA ligase (861 aa).

The 'HIGH' region signature appears at 57-67; it reads PYANGNIHVGH. An L-isoleucyl-5'-AMP-binding site is contributed by Glu-549. The short motif at 590–594 is the 'KMSKS' region element; the sequence is KMSKS. Lys-593 is an ATP binding site.

Belongs to the class-I aminoacyl-tRNA synthetase family. IleS type 1 subfamily. As to quaternary structure, monomer.

Its subcellular location is the cytoplasm. The catalysed reaction is tRNA(Ile) + L-isoleucine + ATP = L-isoleucyl-tRNA(Ile) + AMP + diphosphate. Its function is as follows. Catalyzes the attachment of isoleucine to tRNA(Ile). As IleRS can inadvertently accommodate and process structurally similar amino acids such as valine, to avoid such errors it has two additional distinct tRNA(Ile)-dependent editing activities. One activity is designated as 'pretransfer' editing and involves the hydrolysis of activated Val-AMP. The other activity is designated 'posttransfer' editing and involves deacylation of mischarged Val-tRNA(Ile). The chain is Isoleucine--tRNA ligase from Mycoplasma pneumoniae (strain ATCC 29342 / M129 / Subtype 1) (Mycoplasmoides pneumoniae).